An 84-amino-acid polypeptide reads, in one-letter code: Small nuclear ribonucleoprotein E (84 aa).

One can recognise a Sm domain in the interval Ile13–Ile84.

It belongs to the snRNP Sm proteins family. As to quaternary structure, component of the Sm core complex, present in spliceosomal snRNP U1, U2, U4/U6 and U5. The core complex contains smb1, smd1, smd2, smd3, sme1, smf1 and smg1 (Sm proteins B, D1, D2, D3, E, F and G, respectively), and is probably a heptameric ring structure.

The protein localises to the cytoplasm. The protein resides in the nucleus. In terms of biological role, involved in pre-mRNA splicing. Binds and is required for the stability of snRNA U1, U2, U4 and U5 which contain a highly conserved structural motif called the Sm binding site. Involved in cap modification. This Schizosaccharomyces pombe (strain 972 / ATCC 24843) (Fission yeast) protein is Small nuclear ribonucleoprotein E.